The primary structure comprises 833 residues: Leucine--tRNA ligase (833 aa).

The 'HIGH' region motif lies at 41-52; the sequence is PYPSGAGLHVGH. Positions 610–614 match the 'KMSKS' region motif; sequence KMSKS. Residue Lys613 coordinates ATP.

This sequence belongs to the class-I aminoacyl-tRNA synthetase family.

It is found in the cytoplasm. The enzyme catalyses tRNA(Leu) + L-leucine + ATP = L-leucyl-tRNA(Leu) + AMP + diphosphate. The protein is Leucine--tRNA ligase of Streptococcus equi subsp. equi (strain 4047).